Reading from the N-terminus, the 589-residue chain is Ufm1-specific protease (589 aa).

Residues 1–22 (MTNSQTVSLIGPTQMAPQSTPP) are disordered. Active-site residues include Cys-421, Asp-545, and His-547.

This sequence belongs to the peptidase C78 family. Interacts with odr-4. As to expression, expressed in head and tail neurons. Expressed in the amphid head neurons ADL, ASI, ASH, ASJ, ASG, ADF, ASK, AWA, AWB, AWC, and in two tail neurons, the phasmid tail neurons PHA and PHB.

The protein localises to the endoplasmic reticulum membrane. It localises to the cytoplasm. Its subcellular location is the perinuclear region. Functionally, thiol protease which recognizes and hydrolyzes the peptide bond at the C-terminal Gly of ufm-1, a ubiquitin-like modifier protein bound to a number of target proteins. Required, with oct-4, for the localization of a subset of 7 transmembrane domain odorant receptors, including odr-10, to the cilia of olfactory neurons AWA and AWC. Operates in aggregation behavior, and responses to oxygen levels. The sequence is that of Ufm1-specific protease from Caenorhabditis elegans.